We begin with the raw amino-acid sequence, 453 residues long: Serine protease HTRA3 (453 aa).

The signal sequence occupies residues methionine 1–alanine 17. Positions proline 21 to arginine 84 constitute an IGFBP N-terminal domain. 8 disulfide bridges follow: cysteine 25–cysteine 48, cysteine 29–cysteine 50, cysteine 34–cysteine 51, cysteine 39–cysteine 54, cysteine 62–cysteine 76, cysteine 70–cysteine 81, cysteine 83–cysteine 101, and cysteine 90–cysteine 126. Residues glycine 64–leucine 128 enclose the Kazal-like domain. Positions glycine 175 to phenylalanine 340 are serine protease. Residues histidine 191, aspartate 227, and serine 305 each act as charge relay system in the active site. The PDZ domain maps to isoleucine 359–leucine 444.

The protein belongs to the peptidase S1C family. In terms of assembly, homotrimer. Interacts with TGFB1; the interaction inhibits TGFB-mediated signaling. Interacts with BMP4; the interaction inhibits BMP4-mediated signaling. Interacts with TGFB2 and GDF5. Interacts with MYH9. Widely expressed, with highest levels in both adult and fetal heart, ovary, uterus placenta, and bladder. In the endometrium, expressed in epithelial glands and the stroma. Also present in leukocytes. Isoform 1 is predominant in heart and skeletal muscle, whereas isoform 2 is predominant in placenta and kidney.

The protein resides in the secreted. Functionally, serine protease that cleaves beta-casein/CSN2 as well as several extracellular matrix (ECM) proteoglycans such as decorin/DCN, biglycan/BGN and fibronectin/FN1. Inhibits signaling mediated by TGF-beta family proteins possibly indirectly by degradation of these ECM proteoglycans. May act as a tumor suppressor. Negatively regulates, in vitro, trophoblast invasion during placental development and may be involved in the development of the placenta in vivo. May also have a role in ovarian development, granulosa cell differentiation and luteinization. In Homo sapiens (Human), this protein is Serine protease HTRA3 (HTRA3).